The chain runs to 183 residues: Gamma-crystallin N-B (183 aa).

Beta/gamma crystallin 'Greek key' domains lie at 6 to 46 (GKIC…RVES), 47 to 89 (GAWI…RPIR), 95 to 136 (YRME…RVFG), and 138 to 180 (GAWV…RRIV).

Belongs to the beta/gamma-crystallin family. In terms of assembly, monomer.

Its function is as follows. Crystallins are the dominant structural components of the vertebrate eye lens. The protein is Gamma-crystallin N-B (crygnb) of Danio rerio (Zebrafish).